Consider the following 709-residue polypeptide: Ribosomal RNA large subunit methyltransferase K/L (709 aa).

In terms of domain architecture, THUMP spans 43–154 (LAYRITLWTR…NGVITIAMNF (112 aa)).

Belongs to the methyltransferase superfamily. RlmKL family.

It is found in the cytoplasm. It carries out the reaction guanosine(2445) in 23S rRNA + S-adenosyl-L-methionine = N(2)-methylguanosine(2445) in 23S rRNA + S-adenosyl-L-homocysteine + H(+). The catalysed reaction is guanosine(2069) in 23S rRNA + S-adenosyl-L-methionine = N(2)-methylguanosine(2069) in 23S rRNA + S-adenosyl-L-homocysteine + H(+). Functionally, specifically methylates the guanine in position 2445 (m2G2445) and the guanine in position 2069 (m7G2069) of 23S rRNA. The protein is Ribosomal RNA large subunit methyltransferase K/L of Shewanella baltica (strain OS195).